We begin with the raw amino-acid sequence, 1457 residues long: Receptor-type tyrosine-protein phosphatase kappa (1457 aa).

The signal sequence occupies residues 1–25 (MDVAAAALPAFVALWLLYPWPLLGS). Topologically, residues 26 to 752 (ALGQFSAGGC…PAKQTDRVVK (727 aa)) are extracellular. In terms of domain architecture, MAM spans 30–193 (FSAGGCTFDD…IQVLSYPCDK (164 aa)). N100, N139, and N210 each carry an N-linked (GlcNAc...) asparagine glycan. The Ig-like C2-type domain maps to 195-280 (PHFLRLGDVE…TQSERGSGVS (86 aa)). Residues C215 and C269 are joined by a disulfide bond. 4 Fibronectin type-III domains span residues 293–388 (PIAP…CAEP), 391–487 (TPKT…TDED), 490–594 (GPVP…SAPS), and 595–688 (LPDY…TVGD). 9 N-linked (GlcNAc...) asparagine glycosylation sites follow: N415, N423, N435, N461, N551, N585, N589, N606, and N689. A helical membrane pass occupies residues 753–774 (IAGISAGILVFILLLLVVIVIV). The Cytoplasmic portion of the chain corresponds to 775 to 1457 (KKSKLAKKRK…DVALEYLESS (683 aa)). S868 carries the phosphoserine modification. Tyrosine-protein phosphatase domains are found at residues 899-1159 (FKEE…ILEA) and 1191-1453 (LKDE…ALEY). Residues D1068, 1100-1106 (CSAGAGR), and Q1144 each bind substrate. Catalysis depends on C1100, which acts as the Phosphocysteine intermediate. C1394 acts as the Phosphocysteine intermediate in catalysis.

Belongs to the protein-tyrosine phosphatase family. Receptor class 2B subfamily. In terms of processing, this protein undergoes proteolytic processing. High levels in liver and kidney. Lower levels in lung, brain and heart. Not seen in spleen and testis.

The protein resides in the membrane. It carries out the reaction O-phospho-L-tyrosyl-[protein] + H2O = L-tyrosyl-[protein] + phosphate. Its function is as follows. Regulation of processes involving cell contact and adhesion such as growth control, tumor invasion, and metastasis. Negative regulator of EGFR signaling pathway. Forms complexes with beta-catenin and gamma-catenin/plakoglobin. Beta-catenin may be a substrate for the catalytic activity of PTPRK/PTP-kappa. The chain is Receptor-type tyrosine-protein phosphatase kappa (Ptprk) from Mus musculus (Mouse).